We begin with the raw amino-acid sequence, 417 residues long: CinA-like protein (417 aa).

This sequence belongs to the CinA family.

This Leptospira biflexa serovar Patoc (strain Patoc 1 / Ames) protein is CinA-like protein.